The primary structure comprises 128 residues: Large ribosomal subunit protein bL19 (128 aa).

This sequence belongs to the bacterial ribosomal protein bL19 family.

In terms of biological role, this protein is located at the 30S-50S ribosomal subunit interface and may play a role in the structure and function of the aminoacyl-tRNA binding site. This chain is Large ribosomal subunit protein bL19, found in Janthinobacterium sp. (strain Marseille) (Minibacterium massiliensis).